The following is a 480-amino-acid chain: Carboxy-terminal processing protease CtpB (480 aa).

An N-terminal signal peptide occupies residues 1–23 (MNQKIMAVIAAGSMLFGGAGVYA). Positions 92–182 (SVYMDKQTAK…SSVSMKIQRP (91 aa)) constitute a PDZ domain. The peptide binding stretch occupies residues 113–116 (GIGA). Serine 309 (nucleophile) is an active-site residue. Residues lysine 334 and glutamine 338 each act as charge relay system in the active site.

Belongs to the peptidase S41A family. As to quaternary structure, homodimer. Post-translationally, is cleaved by SpoIVB in vitro and in vivo but this cleavage does not appear to be necessary for CtpB activation. CtpB can also cleave itself in vivo.

It localises to the forespore intermembrane space. The catalysed reaction is The enzyme shows specific recognition of a C-terminal tripeptide, Xaa-Yaa-Zaa, in which Xaa is preferably Ala or Leu, Yaa is preferably Ala or Tyr, and Zaa is preferably Ala, but then cleaves at a variable distance from the C-terminus. A typical cleavage is -Ala-Ala-|-Arg-Ala-Ala-Lys-Glu-Asn-Tyr-Ala-Leu-Ala-Ala.. Activated by peptide binding to the PDZ domain. In terms of biological role, involved in the signal transduction pathway leading to the proteolytic activation of the mother cell transcription factor pro-sigma-K during sporulation. The signaling serine protease CtpB triggers pro-sigma-K processing by cleaving the pre-processed regulatory protein SpoIVFA and is necessary for the proper timing of sigma-K activation. This chain is Carboxy-terminal processing protease CtpB (ctpB), found in Bacillus subtilis (strain 168).